Reading from the N-terminus, the 422-residue chain is MKPLLKENSLIQVKHILKAHQNVKDVVIHTPLQRNDRLSERYECNIYLKREDLQVVRSFKLRGAYHKMKQLSSEQTENGVVCASAGNHAQGVAFSCKHLGIHGKIFMPSTTPRQKVSQVELFGKGFIDIILTGDTFDDVYKSAAECCEAESRTFIHPFDDPDVMAGQGTLAVEILNDIDTEPHFLFASVGGGGLLSGVGTYLKNVSPDTKVIAVEPAGAASYFESNKAGHVVTLDKIDKFVDGAAVKKIGEETFRTLETVVDDILLVPEGKVCTSILELYNECAVVAEPAGALSVAALDLYKDQIKGKNVVCVVSGGNNDIGRMQEMKERSLIFEGLQHYFIVNFPQRAGALREFLDEVLGPNDDITRFEYTKKNNKSNGPALVGIELQNKADYGPLIERMNKKPFHYVEVNKDEDLFHLLI.

Lysine 60 carries the N6-(pyridoxal phosphate)lysine modification. Residues asparagine 87, 190–194 (GGGGL), and serine 315 contribute to the pyridoxal 5'-phosphate site. An ACT-like domain is found at 339-413 (HYFIVNFPQR…KPFHYVEVNK (75 aa)).

It belongs to the serine/threonine dehydratase family. Homotetramer. The cofactor is pyridoxal 5'-phosphate.

The catalysed reaction is L-threonine = 2-oxobutanoate + NH4(+). Its pathway is amino-acid biosynthesis; L-isoleucine biosynthesis; 2-oxobutanoate from L-threonine: step 1/1. Its function is as follows. Catalyzes the anaerobic formation of alpha-ketobutyrate and ammonia from threonine in a two-step reaction. The first step involved a dehydration of threonine and a production of enamine intermediates (aminocrotonate), which tautomerizes to its imine form (iminobutyrate). Both intermediates are unstable and short-lived. The second step is the nonenzymatic hydrolysis of the enamine/imine intermediates to form 2-ketobutyrate and free ammonia. In the low water environment of the cell, the second step is accelerated by RidA. The sequence is that of L-threonine dehydratase biosynthetic IlvA (ilvA) from Bacillus subtilis (strain 168).